Consider the following 517-residue polypeptide: Putative succinate-semialdehyde dehydrogenase [NADP(+)] (517 aa).

Residues tryptophan 157–asparagine 158, lysine 181–serine 184, and glycine 232–serine 233 each bind NADP(+). The active-site Proton acceptor is glutamate 254. Position 255 (leucine 255) interacts with NADP(+). Residue cysteine 288 is the Nucleophile of the active site. Glutamate 386 provides a ligand contact to NADP(+).

This sequence belongs to the aldehyde dehydrogenase family.

The catalysed reaction is succinate semialdehyde + NADP(+) + H2O = succinate + NADPH + 2 H(+). Its function is as follows. Catalyzes the NADP(+)-dependent oxidation of succinate semialdehyde to succinate. Although it has succinate semialdehyde dehydrogenase activity, is likely to act physiologically on a different aldehyde(s). The sequence is that of Putative succinate-semialdehyde dehydrogenase [NADP(+)] (gabD2) from Mycolicibacterium smegmatis (strain ATCC 700084 / mc(2)155) (Mycobacterium smegmatis).